Consider the following 242-residue polypeptide: EF-hand domain-containing protein D2 (242 aa).

A disordered region spans residues 1-53; it reads MATDELASKLSRRLQMEGEGGGEAPEQPGLNGAAAAAAAAGAPDETAEALGSA. Ala2 bears the N-acetylalanine mark. Residue Ser11 is modified to Phosphoserine. The span at 32-42 shows a compositional bias: low complexity; it reads GAAAAAAAAGA. Phosphoserine is present on residues Ser76 and Ser78. A Phosphotyrosine modification is found at Tyr85. EF-hand domains are found at residues 94-129 and 130-165; these read KQIK…LGAP and QTHL…AAAG. Asp107, Asp111, Glu118, Asp143, Asp145, Asp147, Lys149, and Glu154 together coordinate Ca(2+). Lys235 carries the N6-acetyllysine modification.

Interacts with CASP9; with inactive form.

The protein resides in the membrane raft. In terms of biological role, may regulate B-cell receptor (BCR)-induced immature and primary B-cell apoptosis. Plays a role as negative regulator of the canonical NF-kappa-B-activating branch. Controls spontaneous apoptosis through the regulation of BCL2L1 abundance. This chain is EF-hand domain-containing protein D2 (EFHD2), found in Bos taurus (Bovine).